We begin with the raw amino-acid sequence, 170 residues long: Acireductone dioxygenase (170 aa).

The Fe(2+) site is built by His99, His101, Glu105, and His144. Residues His99, His101, Glu105, and His144 each coordinate Ni(2+).

The protein belongs to the acireductone dioxygenase (ARD) family. Monomer. Requires Fe(2+) as cofactor. Ni(2+) is required as a cofactor.

The enzyme catalyses 1,2-dihydroxy-5-(methylsulfanyl)pent-1-en-3-one + O2 = 3-(methylsulfanyl)propanoate + CO + formate + 2 H(+). It carries out the reaction 1,2-dihydroxy-5-(methylsulfanyl)pent-1-en-3-one + O2 = 4-methylsulfanyl-2-oxobutanoate + formate + 2 H(+). It participates in amino-acid biosynthesis; L-methionine biosynthesis via salvage pathway; L-methionine from S-methyl-5-thio-alpha-D-ribose 1-phosphate: step 5/6. Its function is as follows. Catalyzes 2 different reactions between oxygen and the acireductone 1,2-dihydroxy-3-keto-5-methylthiopentene (DHK-MTPene) depending upon the metal bound in the active site. Fe-containing acireductone dioxygenase (Fe-ARD) produces formate and 2-keto-4-methylthiobutyrate (KMTB), the alpha-ketoacid precursor of methionine in the methionine recycle pathway. Ni-containing acireductone dioxygenase (Ni-ARD) produces methylthiopropionate, carbon monoxide and formate, and does not lie on the methionine recycle pathway. This chain is Acireductone dioxygenase, found in Bacillus mycoides (strain KBAB4) (Bacillus weihenstephanensis).